The primary structure comprises 200 residues: MSPSWLVIGLGNPGPRYDGTRHNVGADVIAELCRRAGEKLSPARGQRAELVRTRLSSAGLGVPAVDAQTVILMRSRTYMNESGIAVSKVASFAGITPDHLIVVHDEIDLDPGRLRLKKGGGDNGHNGLKSIRAHLRTGDFIRVRLGVGRPPGHQDPADWVLARVPARQRAEMGVQVALAADAVESIIIQGLAAAQNRFNS.

Tyr-17 is a tRNA binding site. His-22 acts as the Proton acceptor in catalysis. Residues Tyr-78, Asn-80, and Asn-126 each contribute to the tRNA site.

It belongs to the PTH family. As to quaternary structure, monomer.

The protein resides in the cytoplasm. It carries out the reaction an N-acyl-L-alpha-aminoacyl-tRNA + H2O = an N-acyl-L-amino acid + a tRNA + H(+). Hydrolyzes ribosome-free peptidyl-tRNAs (with 1 or more amino acids incorporated), which drop off the ribosome during protein synthesis, or as a result of ribosome stalling. In terms of biological role, catalyzes the release of premature peptidyl moieties from peptidyl-tRNA molecules trapped in stalled 50S ribosomal subunits, and thus maintains levels of free tRNAs and 50S ribosomes. The chain is Peptidyl-tRNA hydrolase from Cutibacterium acnes (strain DSM 16379 / KPA171202) (Propionibacterium acnes).